The sequence spans 539 residues: 2-isopropylmalate synthase (539 aa).

The Pyruvate carboxyltransferase domain occupies 8-269 (VLIFDTTLRD…YFNPFFGRPP (262 aa)). The Mn(2+) site is built by aspartate 17, histidine 208, histidine 210, and asparagine 244. Residues 408–539 (QLKLVQVSCG…DLAKVEKKGI (132 aa)) form a regulatory domain region.

It belongs to the alpha-IPM synthase/homocitrate synthase family. LeuA type 1 subfamily. Homodimer. Mn(2+) is required as a cofactor.

Its subcellular location is the cytoplasm. It carries out the reaction 3-methyl-2-oxobutanoate + acetyl-CoA + H2O = (2S)-2-isopropylmalate + CoA + H(+). The protein operates within amino-acid biosynthesis; L-leucine biosynthesis; L-leucine from 3-methyl-2-oxobutanoate: step 1/4. Functionally, catalyzes the condensation of the acetyl group of acetyl-CoA with 3-methyl-2-oxobutanoate (2-ketoisovalerate) to form 3-carboxy-3-hydroxy-4-methylpentanoate (2-isopropylmalate). The chain is 2-isopropylmalate synthase from Prochlorococcus marinus (strain NATL2A).